A 216-amino-acid chain; its full sequence is PEP-dependent dihydroxyacetone kinase 2, ADP-binding subunit DhaL (216 aa).

The region spanning 9 to 210 (AFFGHVLQDM…SWMLMNVILE (202 aa)) is the DhaL domain. Positions 33, 38, and 40 each coordinate Mg(2+). ADP contacts are provided by residues 41–44 (HGIN), 84–85 (AS), glycine 126, methionine 135, arginine 182, and 195–197 (DPG).

In terms of assembly, homodimer. The dihydroxyacetone kinase complex is composed of a homodimer of DhaM, a homodimer of DhaK and the subunit DhaL. Mg(2+) is required as a cofactor.

It is found in the cytoplasm. The enzyme catalyses dihydroxyacetone + phosphoenolpyruvate = dihydroxyacetone phosphate + pyruvate. Its pathway is polyol metabolism; glycerol degradation. Its function is as follows. ADP-binding subunit of the dihydroxyacetone kinase, which is responsible for the phosphoenolpyruvate (PEP)-dependent phosphorylation of dihydroxyacetone. DhaL-ADP is converted to DhaL-ATP via a phosphoryl group transfer from DhaM and transmits it to dihydroxyacetone binds to DhaK. In Listeria innocua serovar 6a (strain ATCC BAA-680 / CLIP 11262), this protein is PEP-dependent dihydroxyacetone kinase 2, ADP-binding subunit DhaL.